Here is a 132-residue protein sequence, read N- to C-terminus: D-ribose pyranase (132 aa).

Residue His-20 is the Proton donor of the active site. Residues Asp-28, His-98, and 120 to 122 contribute to the substrate site; that span reads YAN.

It belongs to the RbsD / FucU family. RbsD subfamily. As to quaternary structure, homodecamer.

The protein localises to the cytoplasm. The catalysed reaction is beta-D-ribopyranose = beta-D-ribofuranose. The protein operates within carbohydrate metabolism; D-ribose degradation; D-ribose 5-phosphate from beta-D-ribopyranose: step 1/2. Catalyzes the interconversion of beta-pyran and beta-furan forms of D-ribose. The polypeptide is D-ribose pyranase (Geobacillus thermodenitrificans (strain NG80-2)).